A 570-amino-acid polypeptide reads, in one-letter code: RNA polymerase I termination factor (570 aa).

Residues 1 to 16 (MDSVSNLKSTNFQNNN) are compositionally biased toward polar residues. Disordered regions lie at residues 1 to 21 (MDSV…PKES), 37 to 68 (HIKK…DMDW), and 100 to 138 (SSMR…AKIK). The span at 37-56 (HIKKTKKKLKKQKKRKHGSK) shows a compositional bias: basic residues. Residue Thr64 is modified to Phosphothreonine. Positions 108–137 (RSCHKKSSNSRSERKKHRKRKSSKERKAKI) are enriched in basic residues. The 67-residue stretch at 273-339 (KFTPSEENAL…SIYKHIRRKY (67 aa)) folds into the Myb-like 1 domain. The HTH myb-type domain maps to 340–391 (HIFEQRGKWTPEEDQELARLCLEKEGHWTEVGKLLGRMPEDCRDRWRNYMKC). Positions 367-389 (WTEVGKLLGRMPEDCRDRWRNYM) form a DNA-binding region, H-T-H motif. 2 consecutive Myb-like domains span residues 392-486 (GSKR…NKLV) and 493-549 (SMLS…MREK).

Interacts with FOB1. Interacts with the RENT complex subunits NET1 and SIR2.

It localises to the nucleus. The protein resides in the nucleolus. DNA-binding protein that recognizes sequence-specific replication termini (Ter sites) within rDNA. Binds to rDNA terminator elements and mediates efficient RNA polymerase I transcription termination. Required for rDNA silencing at the non-transcribed spacer 1 (NTS1). Promotes the association of SIR2 with NTS1 and contributes to maintenance of rDNA stability. The chain is RNA polymerase I termination factor from Saccharomyces cerevisiae (strain ATCC 204508 / S288c) (Baker's yeast).